The chain runs to 352 residues: Quinolinate synthase (352 aa).

Iminosuccinate contacts are provided by histidine 48 and serine 69. Cysteine 114 contacts [4Fe-4S] cluster. Residues 140–142 (YAN) and serine 157 each bind iminosuccinate. Residue cysteine 201 participates in [4Fe-4S] cluster binding. Iminosuccinate-binding positions include 227-229 (HPE) and threonine 244. A [4Fe-4S] cluster-binding site is contributed by cysteine 298.

Belongs to the quinolinate synthase family. Type 1 subfamily. It depends on [4Fe-4S] cluster as a cofactor.

Its subcellular location is the cytoplasm. The catalysed reaction is iminosuccinate + dihydroxyacetone phosphate = quinolinate + phosphate + 2 H2O + H(+). The protein operates within cofactor biosynthesis; NAD(+) biosynthesis; quinolinate from iminoaspartate: step 1/1. Catalyzes the condensation of iminoaspartate with dihydroxyacetone phosphate to form quinolinate. The sequence is that of Quinolinate synthase from Pseudomonas aeruginosa (strain UCBPP-PA14).